We begin with the raw amino-acid sequence, 347 residues long: Pre-B-cell leukemia transcription factor 1 (347 aa).

The tract at residues Met1 to Lys40 is disordered. Residues Gly38–Asp232 enclose the PBC domain. Residues Asp45–Gly124 are PBC-A. The tract at residues Ala127–Asp232 is PBC-B. A DNA-binding region (homeobox; TALE-type) is located at residues Ala233–Ile295. Over residues Val318–Ser331 the composition is skewed to polar residues. Residues Val318–Gln347 form a disordered region.

This sequence belongs to the TALE/PBX homeobox family. Forms a heterodimer with meis1; the interaction is necessary for neural fate induction.

The protein localises to the nucleus. Its function is as follows. Acts as a transcriptional activator in complex with isoform 2 of meis1, to induce posterior neural and neural crest gene expression, and thereby specify hindbrain and neural crest cell fate. Binds to a highly conserved region in the promoter of the neural crest gene zic3. Required for the nuclear transport or retention of meis1. The sequence is that of Pre-B-cell leukemia transcription factor 1 from Xenopus tropicalis (Western clawed frog).